A 272-amino-acid polypeptide reads, in one-letter code: Insulin-like growth factor-binding protein 1 (272 aa).

The signal sequence occupies residues 1-25 (MPEFLTVVSWPFLILLSFQVRVVAG). The IGFBP N-terminal domain occupies 28–109 (QPWHCAPCTA…TRGQGACVLE (82 aa)). Cystine bridges form between C32/C59, C35/C61, C43/C62, C50/C65, C73/C86, and C80/C106. A disordered region spans residues 115-143 (TSSLSGSQHEEAKAAVASEDELAESPEMT). The segment covering 132–143 (SEDELAESPEMT) has biased composition (acidic residues). 3 positions are modified to phosphoserine: S139, S157, and S169. At T170 the chain carries Phosphothreonine. Y171 is subject to Phosphotyrosine. The 79-residue stretch at 186–264 (KEPCQRELYK…SLETRGDPNC (79 aa)) folds into the Thyroglobulin type-1 domain. 3 disulfide bridges follow: C189–C219, C230–C241, and C243–C264. A Phosphoserine modification is found at S255. The short motif at 259–261 (RGD) is the Cell attachment site element.

Binds equally well IGF1 and IGF2. Interacts with integrin ITGA5:ITGB1. Interacts with VHL; this interaction inhibits HIF1A degradation.

The protein localises to the secreted. Its function is as follows. Multifunctional protein that plays a critical role in regulating the availability of IGFs such as IGF1 and IGF2 to their receptors and thereby regulates IGF-mediated cellular processes including cell migration, proliferation, differentiation or apoptosis in a cell-type specific manner. Also plays a positive role in cell migration by interacting with integrin ITGA5:ITGB1 through its RGD motif. Mechanistically, binding to integrins leads to activation of focal adhesion kinase/PTK2 and stimulation of the mitogen-activated protein kinase (MAPK) pathway. Regulates cardiomyocyte apoptosis by suppressing HIF-1alpha/HIF1A ubiquitination and subsequent degradation. The chain is Insulin-like growth factor-binding protein 1 (Igfbp1) from Rattus norvegicus (Rat).